We begin with the raw amino-acid sequence, 381 residues long: Erythronate-4-phosphate dehydrogenase (381 aa).

Substrate contacts are provided by serine 45 and threonine 67. NAD(+) contacts are provided by residues 127 to 128 (QV), aspartate 147, and threonine 176. The active site involves arginine 209. Aspartate 233 is a binding site for NAD(+). The active site involves glutamate 238. Catalysis depends on histidine 255, which acts as the Proton donor. Position 258 (glycine 258) interacts with NAD(+). Tyrosine 259 is a substrate binding site.

It belongs to the D-isomer specific 2-hydroxyacid dehydrogenase family. PdxB subfamily. In terms of assembly, homodimer.

It is found in the cytoplasm. The catalysed reaction is 4-phospho-D-erythronate + NAD(+) = (R)-3-hydroxy-2-oxo-4-phosphooxybutanoate + NADH + H(+). It participates in cofactor biosynthesis; pyridoxine 5'-phosphate biosynthesis; pyridoxine 5'-phosphate from D-erythrose 4-phosphate: step 2/5. Its function is as follows. Catalyzes the oxidation of erythronate-4-phosphate to 3-hydroxy-2-oxo-4-phosphonooxybutanoate. The sequence is that of Erythronate-4-phosphate dehydrogenase from Vibrio cholerae serotype O1 (strain ATCC 39315 / El Tor Inaba N16961).